Consider the following 408-residue polypeptide: Serine/threonine transporter SstT (408 aa).

The next 9 helical transmembrane spans lie at L11 to A31, F43 to L63, P81 to S101, A141 to L161, I192 to G212, L216 to V236, M298 to I318, V330 to I350, and F357 to I377.

It belongs to the dicarboxylate/amino acid:cation symporter (DAACS) (TC 2.A.23) family.

The protein resides in the cell inner membrane. The enzyme catalyses L-serine(in) + Na(+)(in) = L-serine(out) + Na(+)(out). The catalysed reaction is L-threonine(in) + Na(+)(in) = L-threonine(out) + Na(+)(out). Involved in the import of serine and threonine into the cell, with the concomitant import of sodium (symport system). The protein is Serine/threonine transporter SstT of Shewanella sp. (strain W3-18-1).